Here is a 114-residue protein sequence, read N- to C-terminus: Probable 4-amino-4-deoxy-L-arabinose-phosphoundecaprenol flippase subunit ArnE (114 aa).

The next 3 membrane-spanning stretches (helical) occupy residues 38-58 (LTLR…LLWL), 64-84 (LPLS…TLAA), and 94-114 (LRHW…SWHL). Residues 43–112 (LAIAVVSLGL…IMFGILLMSW (70 aa)) enclose the EamA domain.

The protein belongs to the ArnE family. In terms of assembly, heterodimer of ArnE and ArnF.

The protein localises to the cell inner membrane. It functions in the pathway bacterial outer membrane biogenesis; lipopolysaccharide biosynthesis. Translocates 4-amino-4-deoxy-L-arabinose-phosphoundecaprenol (alpha-L-Ara4N-phosphoundecaprenol) from the cytoplasmic to the periplasmic side of the inner membrane. The chain is Probable 4-amino-4-deoxy-L-arabinose-phosphoundecaprenol flippase subunit ArnE from Yersinia pestis bv. Antiqua (strain Antiqua).